Consider the following 506-residue polypeptide: UBX domain-containing protein 4 (506 aa).

The interaction with UBQLN1 stretch occupies residues 1–199 (MLWFQGAIPA…PAEDLTVRVE (199 aa)). Over 1–411 (MLWFQGAIPA…VHSSSGDIWT (411 aa)) the chain is Cytoplasmic. The interval 110-194 (QQMHSSKGEA…CSNQRPAEDL (85 aa)) is disordered. 2 stretches are compositionally biased toward polar residues: residues 120-136 (SVTNDNQSESSVSTPSA) and 153-167 (LCETPATSDIKSDTA). The UBX domain occupies 313–391 (DRSTIARIQF…ELAPSASVVL (79 aa)). Residues 412–432 (LLGTVLYPFLAIWRLISNFLF) lie within the membrane without spanning it. The Cytoplasmic segment spans residues 433–506 (SNPPPAQTSA…TWNGNSTQQM (74 aa)). The interval 437-506 (PAQTSARATS…TWNGNSTQQM (70 aa)) is disordered. Over residues 444 to 456 (ATSTEPSNSASSS) the composition is skewed to low complexity. The segment covering 457–489 (KSEKREPVRKRMLEKRGEDFKKEGKIYRLRTQD) has biased composition (basic and acidic residues). Thr-487 bears the Phosphothreonine mark. The segment covering 496-506 (NTWNGNSTQQM) has biased composition (polar residues).

In terms of assembly, directly interacts with VCP. Interacts with UBQLN1. Forms a complex with VCP and UBQLN1. In terms of tissue distribution, expressed in many tissues, including brain, heart, kidney, liver, muscle and spleen (at protein level).

It localises to the endoplasmic reticulum membrane. The protein resides in the nucleus envelope. Involved in endoplasmic reticulum-associated protein degradation (ERAD). Acts as a platform to recruit both UBQLN1 and VCP to the ER during ERAD. The protein is UBX domain-containing protein 4 (Ubxn4) of Mus musculus (Mouse).